Reading from the N-terminus, the 935-residue chain is Clumping factor A (935 aa).

The signal sequence occupies residues 1–39 (MNMKKKEKHAIRKKSIGVASVLVGTLIGFGLLSSKEADA). Positions 9 to 20 (HAIRKKSIGVAS) match the YSIRK-G/S signaling motif motif. 2 disordered regions span residues 34–205 (SKEA…VSQA) and 529–906 (FNNG…SEDE). The segment at 40–542 (SENSVTQSDS…SGSGDGIDKP (503 aa)) is ligand binding A region. The span at 47–65 (SDSASNESKSNDSSSVSAA) shows a compositional bias: low complexity. A compositionally biased stretch (polar residues) spans 71–105 (TNVSDTKTSSNTNNGETSVAQNPAQQETTQSSSTN). Composition is skewed to low complexity over residues 106 to 132 (ATTE…ATTQ) and 143 to 162 (NQTS…SVNS). The span at 163-205 (PQNSTNAENVSTTQDTSTEATPSNNESAPQNTDASNKDVVSQA) shows a compositional bias: polar residues. The segment covering 547–565 (QPDEPGEIEPIPEDSDSDP) has biased composition (acidic residues). Over residues 566–598 (GSDSGSDSNSDSGSDSGSDSTSDSGSDSASDSD) the composition is skewed to low complexity. The span at 599 to 863 (SASDSDSASD…DNDSDSDSNS (265 aa)) shows a compositional bias: acidic residues. Low complexity predominate over residues 864–882 (DSESGSNNNVVPPNSPKNG). Residues 889–898 (NEAKDSKEPL) show a composition bias toward basic and acidic residues. Residues 898–902 (LPDTG) carry the LPXTG sorting signal motif. T901 carries the post-translational modification Pentaglycyl murein peptidoglycan amidated threonine. The propeptide at 902-935 (GSEDEANTSLIWGLLASLGSLLLFRRKKENKDKK) is removed by sortase.

Belongs to the serine-aspartate repeat-containing protein (SDr) family.

The protein resides in the secreted. The protein localises to the cell wall. Its function is as follows. Cell surface-associated protein implicated in virulence. Promotes bacterial attachment exclusively to the gamma-chain of human fibrinogen. Induces formation of bacterial clumps. In Staphylococcus aureus (strain Mu50 / ATCC 700699), this protein is Clumping factor A (clfA).